The following is a 689-amino-acid chain: UvrABC system protein B (689 aa).

The interval 1-26 is disordered; the sequence is MSDASGPLQPDRPEADVPFRVEAPFD. The region spanning 40 to 422 is the Helicase ATP-binding domain; the sequence is AGYEQGAQQQ…ERAQSANVVE (383 aa). Residue 53–60 coordinates ATP; the sequence is GVTGSGKT. Residues 106-129 carry the Beta-hairpin motif; it reads YYNYYQPEAYVEQTDKYIEKDASI. In terms of domain architecture, Helicase C-terminal spans 443-605; sequence QVEDLMDRID…TTPTTIEKAV (163 aa). One can recognise a UVR domain in the interval 632-667; that stretch reads ALLVEDLEARMEDAASNLEFELAADIRDRMRELREA. Residues 668 to 689 form a disordered region; sequence FDLDGGDAPEDPGGVAPETEDW.

This sequence belongs to the UvrB family. In terms of assembly, forms a heterotetramer with UvrA during the search for lesions. Interacts with UvrC in an incision complex.

Its subcellular location is the cytoplasm. In terms of biological role, the UvrABC repair system catalyzes the recognition and processing of DNA lesions. A damage recognition complex composed of 2 UvrA and 2 UvrB subunits scans DNA for abnormalities. Upon binding of the UvrA(2)B(2) complex to a putative damaged site, the DNA wraps around one UvrB monomer. DNA wrap is dependent on ATP binding by UvrB and probably causes local melting of the DNA helix, facilitating insertion of UvrB beta-hairpin between the DNA strands. Then UvrB probes one DNA strand for the presence of a lesion. If a lesion is found the UvrA subunits dissociate and the UvrB-DNA preincision complex is formed. This complex is subsequently bound by UvrC and the second UvrB is released. If no lesion is found, the DNA wraps around the other UvrB subunit that will check the other stand for damage. This is UvrABC system protein B from Halobacterium salinarum (strain ATCC 700922 / JCM 11081 / NRC-1) (Halobacterium halobium).